An 829-amino-acid chain; its full sequence is Leucine--tRNA ligase (829 aa).

The short motif at 34–44 (PYPSGNIHMGH) is the 'HIGH' region element. Positions 591–595 (KMSKS) match the 'KMSKS' region motif. K594 serves as a coordination point for ATP.

The protein belongs to the class-I aminoacyl-tRNA synthetase family.

The protein resides in the cytoplasm. The enzyme catalyses tRNA(Leu) + L-leucine + ATP = L-leucyl-tRNA(Leu) + AMP + diphosphate. The sequence is that of Leucine--tRNA ligase from Ehrlichia chaffeensis (strain ATCC CRL-10679 / Arkansas).